The chain runs to 231 residues: Somatolactin-1 (231 aa).

Positions 1–24 (MRMIRAIKQGQWAVLLWPYLLTAS) are cleaved as a signal peptide. 3 disulfides stabilise this stretch: C29-C39, C89-C205, and C222-C230. An N-linked (GlcNAc...) asparagine glycan is attached at N145.

It belongs to the somatotropin/prolactin family. Pituitary gland.

Its subcellular location is the secreted. This is Somatolactin-1 from Sparus aurata (Gilthead sea bream).